The sequence spans 348 residues: MSLYLNRIPAMSNHQVALQFEDGVTRFIRIAQGETLSDAAYRQQINIPMDCREGACGTCRAFCESGNYDMPEDNYIEDALTPEEAQQGYVLACQCRPTSDAVFQIQASSEVCKTKIHHFEGTLARVENLSDSTITFDIQLDDGQPDIHFLAGQYVNVTLPGTTETRSYSFSSQPGNRLTGFVVRNVPQGKMSEYLSVQAKAGDKMSFTGPFGSFYLRDVKRPVLMLAGGTGIAPFLSMLQVLEQKGSEHPVRLVFGVTQDCDLVALEQLDALQQKLPWFEYRTVVAHAESQHERKGYVTGHIEYDWLNGGEVDVYLCGPVPMVEAVRSWLDTQGIQPANFLFEKFSAN.

The region spanning 14–109 (HQVALQFEDG…DAVFQIQASS (96 aa)) is the 2Fe-2S ferredoxin-type domain. Residues C51, C56, C59, and C93 each coordinate [2Fe-2S] cluster. The interval 111 to 348 (VCKTKIHHFE…NFLFEKFSAN (238 aa)) is ferredoxin-reductase. The FAD-binding FR-type domain maps to 116-217 (IHHFEGTLAR…TGPFGSFYLR (102 aa)).

This sequence belongs to the bacterial ring-hydroxylating dioxygenase ferredoxin reductase family. As to quaternary structure, this dioxygenase system consists of three proteins: the two subunits of the hydroxylase component (BenA and BenB), and an electron transfer component (BenC). Requires FAD as cofactor. [2Fe-2S] cluster is required as a cofactor.

It carries out the reaction 2 reduced [2Fe-2S]-[ferredoxin] + NAD(+) + H(+) = 2 oxidized [2Fe-2S]-[ferredoxin] + NADH. It participates in xenobiotic degradation; toluene degradation. Functionally, electron transfer component of benzoate 1,2-dioxygenase system. The polypeptide is Benzoate 1,2-dioxygenase electron transfer component (benC) (Acinetobacter baylyi (strain ATCC 33305 / BD413 / ADP1)).